The sequence spans 301 residues: Vomeronasal type-1 receptor 4 (301 aa).

Topologically, residues 1–5 (MASRY) are extracellular. A helical transmembrane segment spans residues 6 to 26 (VAVGMILSQTVVGVLGSFSVL). Over 27–48 (LHYLSFYCTGCRLRSTDLIVKH) the chain is Cytoplasmic. Residues 49–69 (LIVANFLALRCKGVPQTMAAF) form a helical membrane-spanning segment. Over 70 to 88 (GVRYFLNALGCKLVFYLHR) the chain is Extracellular. A helical transmembrane segment spans residues 89–109 (VGRGVSIGTTCLLSVFQVITV). The Cytoplasmic segment spans residues 110-126 (SSRKSRWAKLKEKAPKH). A helical membrane pass occupies residues 127–147 (VGFSVLLCWIVCMLVNIIFPM). At 148–185 (YVTGKWNYTNITVNEDLGYCSGGGNNKIAQTLRAMLLS) the chain is on the extracellular side. N-linked (GlcNAc...) asparagine glycans are attached at residues asparagine 154 and asparagine 157. A helical membrane pass occupies residues 186–206 (FPDVLCLGLMLWVSSSMVCIL). The Cytoplasmic portion of the chain corresponds to 207–234 (HRHKQRVQHIDRSNLSPRASPENRATQS). Residues 235 to 255 (ILILVSTFVSSYTLSCLFQVC) traverse the membrane as a helical segment. Over 256–264 (MALLDNPNS) the chain is Extracellular. The helical transmembrane segment at 265 to 285 (LLVNTSALMSVCFPTLSPFVL) threads the bilayer. Topologically, residues 286–301 (MSCDPSVYRFCFAWKR) are cytoplasmic.

The protein belongs to the G-protein coupled receptor 1 family.

The protein localises to the cell membrane. Its function is as follows. Putative pheromone receptor. In Homo sapiens (Human), this protein is Vomeronasal type-1 receptor 4 (VN1R4).